Reading from the N-terminus, the 195-residue chain is MLQPTLTSWVILAGGQASRMGGKDKGLIALNNKPLIEYVIDRLTPQTSNILINANRNQDDYQQYGPVFGDHFQNFPGPMGGIHAGLLHASTDWVGFVPCDCPRINEDLVERFCRAVTDETDILVAHDGDHQQPVFTLYHKRVLPKLTAFLERGDRKIILLYKECHTQYVDFSDSPDCFVNLNTPEELTQFGQLES.

GTP is bound by residues 12-14, Lys-25, Asn-53, Asp-70, and Asp-100; that span reads LAG. Asp-100 provides a ligand contact to Mg(2+).

Belongs to the MobA family. In terms of assembly, monomer. Mg(2+) serves as cofactor.

It is found in the cytoplasm. The enzyme catalyses Mo-molybdopterin + GTP + H(+) = Mo-molybdopterin guanine dinucleotide + diphosphate. Transfers a GMP moiety from GTP to Mo-molybdopterin (Mo-MPT) cofactor (Moco or molybdenum cofactor) to form Mo-molybdopterin guanine dinucleotide (Mo-MGD) cofactor. This chain is Molybdenum cofactor guanylyltransferase, found in Vibrio vulnificus (strain YJ016).